A 401-amino-acid polypeptide reads, in one-letter code: Phosphoglycerate kinase (401 aa).

Substrate-binding positions include 24–26, Arg-40, 63–66, Arg-122, and Arg-155; these read DFN and HFGR. ATP-binding positions include Lys-206, Gly-297, Glu-328, and 357 to 360; that span reads GGDS.

It belongs to the phosphoglycerate kinase family. As to quaternary structure, monomer.

It is found in the cytoplasm. It carries out the reaction (2R)-3-phosphoglycerate + ATP = (2R)-3-phospho-glyceroyl phosphate + ADP. The protein operates within carbohydrate degradation; glycolysis; pyruvate from D-glyceraldehyde 3-phosphate: step 2/5. The sequence is that of Phosphoglycerate kinase from Synechococcus sp. (strain CC9605).